Here is a 101-residue protein sequence, read N- to C-terminus: Eukaryotic translation initiation factor 4E-binding protein 3 (101 aa).

Residues 1 to 28 (MSSSTSCPIPGCRDQLPDGYSTTPGGTL) form a disordered region. Positions 40 to 46 (YDRKFLL) match the YXXXXLphi motif motif. The short motif at 97-101 (FEMDM) is the TOS motif element.

Belongs to the eIF4E-binding protein family. As to quaternary structure, interacts with EIF4E. Interacts with RPA2 (via N-terminus); the interaction enhances EIF4EBP3-mediated inhibition of EIF4E-mediated mRNA nuclear export. In terms of processing, phosphorylated.

The protein localises to the cytoplasm. It is found in the nucleus. Functionally, repressor of translation initiation that regulates EIF4E activity by preventing its assembly into the eIF4F complex: the hypophosphorylated form competes with EIF4G1/EIF4G3 and strongly binds to EIF4E, leading to repression of translation. In contrast, the hyperphosphorylated form dissociates from EIF4E, allowing interaction between EIF4G1/EIF4G3 and EIF4E, leading to initiation of translation. Inhibits EIF4E-mediated mRNA nuclear export. The polypeptide is Eukaryotic translation initiation factor 4E-binding protein 3 (Eif4ebp3) (Mus musculus (Mouse)).